Reading from the N-terminus, the 908-residue chain is Protein O-mannosyltransferase 1 (908 aa).

2 disordered regions span residues 1-85 and 115-160; these read MYNN…SAIN and GSVE…SGSR. A compositionally biased stretch (basic residues) spans 21–31; the sequence is QRRKTTTRSRS. 2 stretches are compositionally biased toward polar residues: residues 39–54 and 132–149; these read CTSE…NGAQ and LTAT…SPTI. A helical membrane pass occupies residues 190–210; that stretch reads FTVNLSIDLFSWTLFLLAFCT. A glycan (N-linked (GlcNAc...) asparagine) is linked at N265. 5 helical membrane-spanning segments follow: residues 279–299, 311–328, 331–351, 370–390, and 418–438; these read VPIF…APAV, WAAA…SLLT, RFVL…ACLL, AGVL…ALAL, and LSRL…VFYV. MIR domains are found at residues 473 to 534, 545 to 602, and 608 to 664; these read PLAV…VKRP, PDVI…VEIL, and GDSW…VEEH. 4 consecutive transmembrane segments (helical) span residues 749–769, 788–808, 813–833, and 857–877; these read VLIW…LAFY, FLMA…PYYF, LFLH…CFVV, and LALL…LPLS.

Belongs to the glycosyltransferase 39 family. Interacts with tw/POMT2.

It is found in the endoplasmic reticulum membrane. The catalysed reaction is a di-trans,poly-cis-dolichyl beta-D-mannosyl phosphate + L-seryl-[protein] = 3-O-(alpha-D-mannosyl)-L-seryl-[protein] + a di-trans,poly-cis-dolichyl phosphate + H(+). It carries out the reaction a di-trans,poly-cis-dolichyl beta-D-mannosyl phosphate + L-threonyl-[protein] = 3-O-(alpha-D-mannosyl)-L-threonyl-[protein] + a di-trans,poly-cis-dolichyl phosphate + H(+). The protein operates within protein modification; protein glycosylation. Functionally, rt/POMT1 and tw/POMT2 function as a protein O-mannosyltransferase in association with each other to generate and maintain normal muscle development. This Drosophila pseudoobscura pseudoobscura (Fruit fly) protein is Protein O-mannosyltransferase 1.